Reading from the N-terminus, the 262-residue chain is Zinc finger protein ehn-3 (262 aa).

4 consecutive C2H2-type zinc fingers follow at residues 2–24, 30–52, 59–84, and 92–115; these read EKCD…KVMH, FECQ…MMTH, FECP…DSEH, and AKCK…HTAH. The interval 179 to 204 is disordered; it reads SVKSAKELSPTPSTEIETPEEEELDG. Over residues 185–194 the composition is skewed to low complexity; the sequence is ELSPTPSTEI. The span at 195–204 shows a compositional bias: acidic residues; it reads ETPEEEELDG. 2 consecutive C2H2-type zinc fingers follow at residues 208–230 and 236–260; these read WYCD…SGLH and FKCS…YANH.

It belongs to the krueppel C2H2-type zinc-finger protein family.

It localises to the nucleus. Functionally, together with the zinc finger protein ztf-16, plays a role in gonadogenesis, specifically in somatic gonad precursor cell development. This is possibly by regulating tra-1 gene expression. Its function is as follows. Required for proper gonadal primordium assembly and somatic gonad precursor cell morphology. The polypeptide is Zinc finger protein ehn-3 (Caenorhabditis elegans).